The sequence spans 159 residues: Ribosomal RNA large subunit methyltransferase H (159 aa).

S-adenosyl-L-methionine-binding positions include L76, G108, and F127–L132.

The protein belongs to the RNA methyltransferase RlmH family. As to quaternary structure, homodimer.

It is found in the cytoplasm. The catalysed reaction is pseudouridine(1915) in 23S rRNA + S-adenosyl-L-methionine = N(3)-methylpseudouridine(1915) in 23S rRNA + S-adenosyl-L-homocysteine + H(+). Specifically methylates the pseudouridine at position 1915 (m3Psi1915) in 23S rRNA. This Streptococcus suis (strain 05ZYH33) protein is Ribosomal RNA large subunit methyltransferase H.